The chain runs to 318 residues: Cytochrome c biogenesis protein CcsA (318 aa).

8 helical membrane-spanning segments follow: residues 17-37 (VLAL…ISFW), 45-65 (SAVV…QLVL), 75-95 (ISNL…AQLL), 104-124 (IVSA…SFAL), 149-169 (VIMC…AVLF), 224-244 (TITV…VWAN), 258-275 (TWAL…HTRF), and 287-307 (VAVA…LLGI).

This sequence belongs to the CcmF/CycK/Ccl1/NrfE/CcsA family. As to quaternary structure, may interact with ccs1.

Its subcellular location is the cellular thylakoid membrane. Its function is as follows. Required during biogenesis of c-type cytochromes (cytochrome c6 and cytochrome f) at the step of heme attachment. This chain is Cytochrome c biogenesis protein CcsA, found in Prochlorococcus marinus (strain MIT 9313).